The following is a 764-amino-acid chain: Thyrotropin receptor (764 aa).

The N-terminal stretch at 1 to 20 is a signal peptide; the sequence is MRPADLLQLVLLLDLPRDLG. Topologically, residues 21-413 are extracellular; it reads GMGCSSPPCE…EFNPCEDIMG (393 aa). C31 and C41 are disulfide-bonded. N-linked (GlcNAc...) asparagine glycosylation is found at N77, N99, and N113. LRR repeat units lie at residues 100–124, 125–150, 152–174, 176–199, 200–223, 227–248, and 250–271; these read LSKVTHIEIRNTRNLTYIDPDALKE, LPLLKFLGIFNTGLKMFPDLTKVYST, IFFILEITDNPYMTSIPVNAFQG, CNETLTLKLYNNGFTSVQGYAFNG, TKLDAVYLNKNKYLTVIDKDAFGG, GPSLLDVSQTSVTALPSKGLEH, and KELIARNTWTLKKLPLSLSFLH. N-linked (GlcNAc...) asparagine glycosylation is found at N177 and N198. N302 carries N-linked (GlcNAc...) asparagine glycosylation. Y385 carries the sulfotyrosine modification. A helical transmembrane segment spans residues 414 to 441; the sequence is YKFLRIVVWFVSLLALLGNVFVLLILLT. The Cytoplasmic segment spans residues 442–450; that stretch reads SHYKLNVPR. A helical membrane pass occupies residues 451–473; sequence FLMCNLAFADFCMGMYLLLIASV. At 474-494 the chain is on the extracellular side; that stretch reads DLYTHSEYYNHAIDWQTGPGC. A disulfide bridge links C494 with C569. A helical membrane pass occupies residues 495 to 517; sequence NTAGFFTVFASELSVYTLTVITL. The Cytoplasmic portion of the chain corresponds to 518–537; it reads ERWYAITFAMRLDRKIRLRH. Residues 538-560 form a helical membrane-spanning segment; sequence ACAIMVGGWVCCFLLALLPLVGI. Residues 561 to 580 are Extracellular-facing; the sequence is SSYAKVSICLPMDTETPLAL. Residues 581-602 form a helical membrane-spanning segment; it reads AYIVFVLTLNIVAFVIVCCCYV. Residues 603–625 lie on the Cytoplasmic side of the membrane; the sequence is KIYITVRNPQYNPGDKDTKIAKR. A helical membrane pass occupies residues 626 to 649; that stretch reads MAVLIFTDFICMAPISFYALSAIL. The Extracellular portion of the chain corresponds to 650 to 660; it reads NKPLITVSNSK. The helical transmembrane segment at 661-682 threads the bilayer; sequence ILLVLFYPLNSCANPFLYAIFT. Residues 683-764 are Cytoplasmic-facing; the sequence is KAFQRDVFIL…ISEEYMQTVL (82 aa). The PDZ-binding signature appears at 762 to 764; sequence TVL.

The protein belongs to the G-protein coupled receptor 1 family. FSH/LSH/TSH subfamily. As to quaternary structure, interacts with heterodimer GPHA2:GPHB5; this interaction stimulates cAMP production. Interacts (via the PDZ-binding motif) with SCRIB; regulates TSHR trafficking and function. Post-translationally, glycosylated. In terms of processing, sulfated. Sulfation on Tyr-385 plays a role in thyrotropin receptor binding and activation. As to expression, expressed in thyroide cells (at protein level). Expressed in the thyroid.

The protein resides in the cell membrane. It is found in the basolateral cell membrane. In terms of biological role, receptor for the thyroid-stimulating hormone (TSH) or thyrotropin. Also acts as a receptor for the heterodimeric glycoprotein hormone (GPHA2:GPHB5) or thyrostimulin. The activity of this receptor is mediated by G proteins which activate adenylate cyclase. Plays a central role in controlling thyroid cell metabolism. This chain is Thyrotropin receptor (TSHR), found in Homo sapiens (Human).